Consider the following 634-residue polypeptide: tRNA uridine 5-carboxymethylaminomethyl modification enzyme MnmG (634 aa).

Position 13–18 (13–18 (GAGHAG)) interacts with FAD. An NAD(+)-binding site is contributed by 273–287 (GPRYCPSIEDKIIKF).

The protein belongs to the MnmG family. In terms of assembly, homodimer. Heterotetramer of two MnmE and two MnmG subunits. Requires FAD as cofactor.

The protein localises to the cytoplasm. Functionally, NAD-binding protein involved in the addition of a carboxymethylaminomethyl (cmnm) group at the wobble position (U34) of certain tRNAs, forming tRNA-cmnm(5)s(2)U34. The sequence is that of tRNA uridine 5-carboxymethylaminomethyl modification enzyme MnmG from Buchnera aphidicola subsp. Cinara cedri (strain Cc).